The sequence spans 32 residues: Photosystem II reaction center protein T (32 aa).

Residues Ser-3–Phe-23 form a helical membrane-spanning segment.

It belongs to the PsbT family. In terms of assembly, PSII is composed of 1 copy each of membrane proteins PsbA, PsbB, PsbC, PsbD, PsbE, PsbF, PsbH, PsbI, PsbJ, PsbK, PsbL, PsbM, PsbT, PsbX, PsbY, PsbZ, Psb30/Ycf12, peripheral proteins PsbO, CyanoQ (PsbQ), PsbU, PsbV and a large number of cofactors. It forms dimeric complexes.

The protein localises to the cellular thylakoid membrane. Its function is as follows. Found at the monomer-monomer interface of the photosystem II (PS II) dimer, plays a role in assembly and dimerization of PSII. PSII is a light-driven water plastoquinone oxidoreductase, using light energy to abstract electrons from H(2)O, generating a proton gradient subsequently used for ATP formation. The polypeptide is Photosystem II reaction center protein T (Cyanothece sp. (strain PCC 7425 / ATCC 29141)).